The sequence spans 135 residues: NADPH-dependent 7-cyano-7-deazaguanine reductase (135 aa).

C48 acts as the Thioimide intermediate in catalysis. The active-site Proton donor is the D55. Substrate is bound by residues 70–72 (LEL) and 89–90 (HE).

Belongs to the GTP cyclohydrolase I family. QueF type 1 subfamily.

The protein resides in the cytoplasm. It catalyses the reaction 7-aminomethyl-7-carbaguanine + 2 NADP(+) = 7-cyano-7-deazaguanine + 2 NADPH + 3 H(+). Its pathway is tRNA modification; tRNA-queuosine biosynthesis. Functionally, catalyzes the NADPH-dependent reduction of 7-cyano-7-deazaguanine (preQ0) to 7-aminomethyl-7-deazaguanine (preQ1). In Prochlorococcus marinus (strain SARG / CCMP1375 / SS120), this protein is NADPH-dependent 7-cyano-7-deazaguanine reductase.